A 189-amino-acid polypeptide reads, in one-letter code: Potassium-transporting ATPase KdpC subunit (189 aa).

Residues 6–26 traverse the membrane as a helical segment; sequence PAILLFIMFTIICGGIYPALV.

This sequence belongs to the KdpC family. The system is composed of three essential subunits: KdpA, KdpB and KdpC.

The protein localises to the cell inner membrane. Part of the high-affinity ATP-driven potassium transport (or Kdp) system, which catalyzes the hydrolysis of ATP coupled with the electrogenic transport of potassium into the cytoplasm. This subunit acts as a catalytic chaperone that increases the ATP-binding affinity of the ATP-hydrolyzing subunit KdpB by the formation of a transient KdpB/KdpC/ATP ternary complex. The sequence is that of Potassium-transporting ATPase KdpC subunit from Trichlorobacter lovleyi (strain ATCC BAA-1151 / DSM 17278 / SZ) (Geobacter lovleyi).